The chain runs to 263 residues: Small ribosomal subunit protein uS2 (263 aa).

The protein belongs to the universal ribosomal protein uS2 family.

The sequence is that of Small ribosomal subunit protein uS2 from Hyphomonas neptunium (strain ATCC 15444).